A 144-amino-acid chain; its full sequence is Large ribosomal subunit protein uL16 (144 aa).

This sequence belongs to the universal ribosomal protein uL16 family. As to quaternary structure, part of the 50S ribosomal subunit.

Functionally, binds 23S rRNA and is also seen to make contacts with the A and possibly P site tRNAs. This is Large ribosomal subunit protein uL16 from Thermoanaerobacter pseudethanolicus (strain ATCC 33223 / 39E) (Clostridium thermohydrosulfuricum).